The primary structure comprises 58 residues: ATP synthase subunit a (58 aa).

2 consecutive transmembrane segments (helical) span residues 11–31 (EIFY…LTGL) and 35–55 (VAIL…NDAI).

Belongs to the ATPase A chain family. In terms of assembly, F-type ATPases have 2 components, CF(1) - the catalytic core - and CF(0) - the membrane proton channel. CF(1) has five subunits: alpha(3), beta(3), gamma(1), delta(1), epsilon(1). CF(0) has three main subunits: a, b and c.

It is found in the mitochondrion inner membrane. Functionally, mitochondrial membrane ATP synthase (F(1)F(0) ATP synthase or Complex V) produces ATP from ADP in the presence of a proton gradient across the membrane which is generated by electron transport complexes of the respiratory chain. F-type ATPases consist of two structural domains, F(1) - containing the extramembraneous catalytic core and F(0) - containing the membrane proton channel, linked together by a central stalk and a peripheral stalk. During catalysis, ATP synthesis in the catalytic domain of F(1) is coupled via a rotary mechanism of the central stalk subunits to proton translocation. Key component of the proton channel; it may play a direct role in the translocation of protons across the membrane. The polypeptide is ATP synthase subunit a (ATP6) (Brassica tournefortii (Wild turnip)).